Here is a 242-residue protein sequence, read N- to C-terminus: ATP-dependent dethiobiotin synthetase BioD (242 aa).

12-17 serves as a coordination point for ATP; the sequence is EVGKTV. Thr-16 contributes to the Mg(2+) binding site. Residue Lys-37 is part of the active site. Residue Ser-41 coordinates substrate. ATP-binding positions include Asp-51 and 112–115; that span reads EGAG. Mg(2+) contacts are provided by Asp-51 and Glu-112.

The protein belongs to the dethiobiotin synthetase family. In terms of assembly, homodimer. Requires Mg(2+) as cofactor.

It localises to the cytoplasm. It catalyses the reaction (7R,8S)-7,8-diammoniononanoate + CO2 + ATP = (4R,5S)-dethiobiotin + ADP + phosphate + 3 H(+). It functions in the pathway cofactor biosynthesis; biotin biosynthesis; biotin from 7,8-diaminononanoate: step 1/2. Its function is as follows. Catalyzes a mechanistically unusual reaction, the ATP-dependent insertion of CO2 between the N7 and N8 nitrogen atoms of 7,8-diaminopelargonic acid (DAPA, also called 7,8-diammoniononanoate) to form a ureido ring. In Bacillus thuringiensis subsp. konkukian (strain 97-27), this protein is ATP-dependent dethiobiotin synthetase BioD.